Reading from the N-terminus, the 424-residue chain is Serine hydroxymethyltransferase 2 (424 aa).

(6S)-5,6,7,8-tetrahydrofolate is bound by residues Leu125 and 129–131; that span reads GHL. Lys234 carries the post-translational modification N6-(pyridoxal phosphate)lysine. Glu250 serves as a coordination point for (6S)-5,6,7,8-tetrahydrofolate.

Belongs to the SHMT family. In terms of assembly, homodimer. Pyridoxal 5'-phosphate serves as cofactor.

The protein localises to the cytoplasm. It carries out the reaction (6R)-5,10-methylene-5,6,7,8-tetrahydrofolate + glycine + H2O = (6S)-5,6,7,8-tetrahydrofolate + L-serine. It functions in the pathway one-carbon metabolism; tetrahydrofolate interconversion. Its pathway is amino-acid biosynthesis; glycine biosynthesis; glycine from L-serine: step 1/1. Its function is as follows. Catalyzes the reversible interconversion of serine and glycine with tetrahydrofolate (THF) serving as the one-carbon carrier. This reaction serves as the major source of one-carbon groups required for the biosynthesis of purines, thymidylate, methionine, and other important biomolecules. Also exhibits THF-independent aldolase activity toward beta-hydroxyamino acids, producing glycine and aldehydes, via a retro-aldol mechanism. The sequence is that of Serine hydroxymethyltransferase 2 from Cupriavidus pinatubonensis (strain JMP 134 / LMG 1197) (Cupriavidus necator (strain JMP 134)).